Reading from the N-terminus, the 173-residue chain is Shikimate kinase 1 (173 aa).

An ATP-binding site is contributed by 14-19; the sequence is GAGKST. S18 is a binding site for Mg(2+). 3 residues coordinate substrate: D36, R60, and G82. An ATP-binding site is contributed by R120. Position 140 (R140) interacts with substrate. Q157 lines the ATP pocket.

This sequence belongs to the shikimate kinase family. As to quaternary structure, monomer. Mg(2+) is required as a cofactor.

It is found in the cytoplasm. The catalysed reaction is shikimate + ATP = 3-phosphoshikimate + ADP + H(+). It functions in the pathway metabolic intermediate biosynthesis; chorismate biosynthesis; chorismate from D-erythrose 4-phosphate and phosphoenolpyruvate: step 5/7. Catalyzes the specific phosphorylation of the 3-hydroxyl group of shikimic acid using ATP as a cosubstrate. The sequence is that of Shikimate kinase 1 from Erwinia tasmaniensis (strain DSM 17950 / CFBP 7177 / CIP 109463 / NCPPB 4357 / Et1/99).